A 539-amino-acid chain; its full sequence is Hydroxylamine reductase (539 aa).

The [4Fe-4S] cluster site is built by Cys-3, Cys-6, Cys-15, and Cys-21. Hybrid [4Fe-2O-2S] cluster contacts are provided by His-235, Glu-259, Cys-303, Cys-394, Cys-422, Cys-447, Glu-482, and Lys-484. Residue Cys-394 is modified to Cysteine persulfide.

This sequence belongs to the HCP family. Requires [4Fe-4S] cluster as cofactor. It depends on hybrid [4Fe-2O-2S] cluster as a cofactor.

It localises to the cytoplasm. The catalysed reaction is A + NH4(+) + H2O = hydroxylamine + AH2 + H(+). Catalyzes the reduction of hydroxylamine to form NH(3) and H(2)O. This is Hydroxylamine reductase from Methanocaldococcus jannaschii (strain ATCC 43067 / DSM 2661 / JAL-1 / JCM 10045 / NBRC 100440) (Methanococcus jannaschii).